Reading from the N-terminus, the 81-residue chain is Cytotoxin 5 (81 aa).

Residues 1-21 form the signal peptide; that stretch reads MKTLLLTLVVVTIVCLDLGYT. Disulfide bonds link C24–C42, C35–C59, C63–C74, and C75–C80.

It belongs to the three-finger toxin family. Short-chain subfamily. Type IA cytotoxin sub-subfamily. As to quaternary structure, monomer in solution; Homodimer and oligomer in the presence of negatively charged lipids forming a pore with a size ranging between 20 and 30 Angstroms. As to expression, expressed by the venom gland.

Its subcellular location is the secreted. The protein resides in the target cell membrane. Shows cytolytic activity on many different cells by forming pore in lipid membranes. In vivo, increases heart rate or kills the animal by cardiac arrest. In addition, it binds to heparin with high affinity, interacts with Kv channel-interacting protein 1 (KCNIP1) in a calcium-independent manner, and binds to integrin alpha-V/beta-3 (ITGAV/ITGB3) with moderate affinity. This Naja atra (Chinese cobra) protein is Cytotoxin 5.